The primary structure comprises 436 residues: Gamma-glutamyl phosphate reductase (436 aa).

Belongs to the gamma-glutamyl phosphate reductase family.

The protein localises to the cytoplasm. The catalysed reaction is L-glutamate 5-semialdehyde + phosphate + NADP(+) = L-glutamyl 5-phosphate + NADPH + H(+). It functions in the pathway amino-acid biosynthesis; L-proline biosynthesis; L-glutamate 5-semialdehyde from L-glutamate: step 2/2. In terms of biological role, catalyzes the NADPH-dependent reduction of L-glutamate 5-phosphate into L-glutamate 5-semialdehyde and phosphate. The product spontaneously undergoes cyclization to form 1-pyrroline-5-carboxylate. In Prochlorococcus marinus (strain SARG / CCMP1375 / SS120), this protein is Gamma-glutamyl phosphate reductase.